Reading from the N-terminus, the 412-residue chain is Argininosuccinate synthase (412 aa).

Residues 10–18 (AYSGGLDTS) and Ala36 each bind ATP. 2 residues coordinate L-citrulline: Tyr87 and Ser92. Tyr87 is modified (phosphotyrosine). Position 112 is an N6-acetyllysine (Lys112). Tyr113 carries the phosphotyrosine modification. Position 115–123 (115–123 (SHGATGKGN)) interacts with ATP. Positions 119, 123, and 124 each coordinate L-aspartate. Position 123 (Asn123) interacts with L-citrulline. Position 127 (Arg127) interacts with L-citrulline. An N6-acetyllysine; by CLOCK mark is found at Lys165 and Lys176. Residues Ser180 and Ser189 each coordinate L-citrulline. A Phosphoserine modification is found at Ser180. Residue Ser219 is modified to Phosphoserine. Residues Glu270 and Tyr282 each contribute to the L-citrulline site.

It belongs to the argininosuccinate synthase family. Type 1 subfamily. In terms of assembly, homotetramer. Interacts with NMRAL1. Interacts with CLOCK; in a circadian manner. Forms tissue-specific complexes with ASL, SLC7A1, HSP90AA1 and nitric oxide synthase NOS1, NOS2 or NOS3; the complex regulates cell-autonomous L-arginine synthesis and citrulline recycling while channeling extracellular L-arginine to nitric oxide synthesis pathway. Acetylated by CLOCK in a circadian manner which negatively regulates its enzyme activity. Deacetylated by histone deacetylases.

Its subcellular location is the cytoplasm. It localises to the cytosol. The catalysed reaction is L-citrulline + L-aspartate + ATP = 2-(N(omega)-L-arginino)succinate + AMP + diphosphate + H(+). Its pathway is amino-acid biosynthesis; L-arginine biosynthesis; L-arginine from L-ornithine and carbamoyl phosphate: step 2/3. The protein operates within nitrogen metabolism; urea cycle; (N(omega)-L-arginino)succinate from L-aspartate and L-citrulline: step 1/1. One of the enzymes of the urea cycle, the metabolic pathway transforming neurotoxic amonia produced by protein catabolism into inocuous urea in the liver of ureotelic animals. Catalyzes the formation of arginosuccinate from aspartate, citrulline and ATP and together with ASL it is responsible for the biosynthesis of arginine in most body tissues. The polypeptide is Argininosuccinate synthase (Bos taurus (Bovine)).